Here is a 329-residue protein sequence, read N- to C-terminus: Cardiolipin synthase (CMP-forming) (329 aa).

Residues 1 to 34 constitute a mitochondrion transit peptide; sequence MPPSVATHASLLLKAAAAAAHLHPKPFFSPRAAP. Residues 27–55 form a disordered region; it reads FFSPRAAPPRIPSAPAPPAAGGSRYRPTT. A compositionally biased stretch (pro residues) spans 32 to 44; sequence AAPPRIPSAPAPP. 5 consecutive transmembrane segments (helical) span residues 134-154, 156-176, 194-214, 228-248, and 298-318; these read LLTLPTVLTIGRVAAVPLLIS, FYMEGPWAATATTGIFLAAAV, FGAFLDPVADKLMVAATLVLL, PWLLTVPAIAIIGREITMSAV, and VTSGIALLYVSAGLAIWSLVV. At 319-329 the chain is on the mitochondrial intermembrane side; it reads YMRKIWRILLK.

Belongs to the CDP-alcohol phosphatidyltransferase class-I family. Requires Mn(2+) as cofactor.

Its subcellular location is the mitochondrion inner membrane. It catalyses the reaction a CDP-1,2-diacyl-sn-glycerol + a 1,2-diacyl-sn-glycero-3-phospho-(1'-sn-glycerol) = a cardiolipin + CMP + H(+). Functionally, catalyzes the synthesis of cardiolipin (CL) (diphosphatidylglycerol) by specifically transferring a phosphatidyl group from CDP-diacylglycerol to phosphatidylglycerol (PG). CL is a key phospholipid in mitochondrial membranes and plays important roles in maintaining the functional integrity and dynamics of mitochondria under both optimal and stress conditions. In Oryza sativa subsp. japonica (Rice), this protein is Cardiolipin synthase (CMP-forming).